Consider the following 305-residue polypeptide: 3-methyl-2-oxobutanoate hydroxymethyltransferase (305 aa).

D52 and D95 together coordinate Mg(2+). 3-methyl-2-oxobutanoate-binding positions include 52 to 53 (DS), D95, and K125. E127 serves as a coordination point for Mg(2+). The active-site Proton acceptor is the E194.

It belongs to the PanB family. Homodecamer; pentamer of dimers. Mg(2+) is required as a cofactor.

The protein resides in the cytoplasm. The enzyme catalyses 3-methyl-2-oxobutanoate + (6R)-5,10-methylene-5,6,7,8-tetrahydrofolate + H2O = 2-dehydropantoate + (6S)-5,6,7,8-tetrahydrofolate. It participates in cofactor biosynthesis; (R)-pantothenate biosynthesis; (R)-pantoate from 3-methyl-2-oxobutanoate: step 1/2. Catalyzes the reversible reaction in which hydroxymethyl group from 5,10-methylenetetrahydrofolate is transferred onto alpha-ketoisovalerate to form ketopantoate. This is 3-methyl-2-oxobutanoate hydroxymethyltransferase from Anaeromyxobacter sp. (strain Fw109-5).